A 349-amino-acid polypeptide reads, in one-letter code: Peroxidase 23 (349 aa).

An N-terminal signal peptide occupies residues 1-29; the sequence is MGFSSSLSCSAMGALIVGCLLLQASNSNA. Glutamine 30 is subject to Pyrrolidone carboxylic acid. 4 cysteine pairs are disulfide-bonded: cysteine 40–cysteine 120, cysteine 73–cysteine 78, cysteine 126–cysteine 329, and cysteine 206–cysteine 238. The Proton acceptor role is filled by histidine 71. The Ca(2+) site is built by aspartate 72, valine 75, glycine 77, aspartate 79, and serine 81. N-linked (GlcNAc...) asparagine glycosylation is present at asparagine 86. Substrate is bound at residue proline 168. Position 199 (histidine 199) interacts with heme b. Threonine 200 is a binding site for Ca(2+). 2 N-linked (GlcNAc...) asparagine glycosylation sites follow: asparagine 217 and asparagine 243. Residues aspartate 251, threonine 254, and aspartate 259 each contribute to the Ca(2+) site.

Belongs to the peroxidase family. Classical plant (class III) peroxidase subfamily. Heme b serves as cofactor. The cofactor is Ca(2+).

It localises to the secreted. The protein resides in the vacuole. The catalysed reaction is 2 a phenolic donor + H2O2 = 2 a phenolic radical donor + 2 H2O. Removal of H(2)O(2), oxidation of toxic reductants, biosynthesis and degradation of lignin, suberization, auxin catabolism, response to environmental stresses such as wounding, pathogen attack and oxidative stress. These functions might be dependent on each isozyme/isoform in each plant tissue. The chain is Peroxidase 23 (PER23) from Arabidopsis thaliana (Mouse-ear cress).